Consider the following 88-residue polypeptide: uncharacterized protein (88 aa).

The next 2 membrane-spanning stretches (helical) occupy residues 27–46 (LFIF…ETPH) and 61–83 (SMCL…LILI).

It localises to the membrane. This is an uncharacterized protein from Saccharomyces cerevisiae (strain ATCC 204508 / S288c) (Baker's yeast).